A 444-amino-acid polypeptide reads, in one-letter code: Endoglucanase N (444 aa).

The signal sequence occupies residues 1–31 (MWMRRNQIVRKLTLGVVTTVLGMSLSFSALS). Residues histidine 64, 68 to 69 (WF), tyrosine 95, and histidine 130 contribute to the substrate site. The active-site Proton donor is glutamate 168. Residue tyrosine 230 coordinates substrate. Catalysis depends on glutamate 256, which acts as the Nucleophile. Residues 262-263 (AS), tryptophan 290, and 295-297 (KSE) contribute to the substrate site. Positions 332–358 (ANLGGGDTPTTPTTPTEPTNPGNGTTG) are disordered. Residues 339–358 (TPTTPTTPTEPTNPGNGTTG) show a composition bias toward low complexity. The 89-residue stretch at 356–444 (TTGDVVLQYR…DKANRYVLVT (89 aa)) folds into the CBM3 domain.

Belongs to the glycosyl hydrolase 5 (cellulase A) family.

Its subcellular location is the secreted. The enzyme catalyses Endohydrolysis of (1-&gt;4)-beta-D-glucosidic linkages in cellulose, lichenin and cereal beta-D-glucans.. The sequence is that of Endoglucanase N (celN) from Pectobacterium atrosepticum (Erwinia carotovora subsp. atroseptica).